The primary structure comprises 358 residues: Trace amine-associated receptor 7c (358 aa).

Topologically, residues 1–47 (MATDDDSFPWDQDSILSRDLLSASSLQLCYENLNRSCVRSPYSPGSR) are extracellular. An N-linked (GlcNAc...) asparagine glycan is attached at Asn34. Intrachain disulfides connect Cys37–Cys201 and Cys120–Cys205. Residues 48 to 68 (LILYAVFGFGAVLAVCGNLLV) traverse the membrane as a helical segment. At 69 to 83 (MTSILHFRQLHSPAN) the chain is on the cytoplasmic side. A helical transmembrane segment spans residues 84–104 (FLVASLACADLLVGLTVMPFS). The Extracellular portion of the chain corresponds to 105 to 125 (MVRSVEGCWYFGNTYCKFHSC). Residues 126 to 148 (FEGSFCYSSLFHLCFISLDRYIA) traverse the membrane as a helical segment. The Cytoplasmic segment spans residues 149 to 166 (VSDPLIYPTRFTASISGK). Residues 167–187 (CITFSWLLSIIYSFSLLYTGA) form a helical membrane-spanning segment. The Extracellular portion of the chain corresponds to 188 to 211 (NEAGLEDLVSALTCVGGCQVAVNQ). A helical membrane pass occupies residues 212-232 (SWVFINFLLFLVPALVMMTVY). Over 233–274 (SKIFLIAKQQAQNIEKMSKQTARASESYKDRVAKRERKAAKT) the chain is Cytoplasmic. The chain crosses the membrane as a helical span at residues 275–295 (LGIAVAAFLLSWLPYFIDSII). The Extracellular segment spans residues 296-309 (DAFLGFITPTYMYE). The helical transmembrane segment at 310–332 (ILVWIVYYNSAMNPLIYAFFYPW) threads the bilayer. Topologically, residues 333-358 (FRKAIKLIVTGKILRENSSTINLFPE) are cytoplasmic.

The protein belongs to the G-protein coupled receptor 1 family.

It localises to the cell membrane. Functionally, olfactory receptor specific for N,N-dimethylalkylamines trace amines. Trace amine compounds are enriched in animal body fluids and act on trace amine-associated receptors (TAARs) to elicit both intraspecific and interspecific innate behaviors. Ligand-binding causes a conformation change that triggers signaling via G(s)-class of G alpha proteins (GNAL or GNAS). The polypeptide is Trace amine-associated receptor 7c (Rattus norvegicus (Rat)).